Here is a 1040-residue protein sequence, read N- to C-terminus: Neprilysin-4 (1040 aa).

Residues 1–27 (MSRHSQLKLAMPSVHGAPATAPGSPMN) are disordered. Positions 1–45 (MSRHSQLKLAMPSVHGAPATAPGSPMNAKARSVKLGLGVNQRTGR) are required for maintaining muscle integrity. At 1–55 (MSRHSQLKLAMPSVHGAPATAPGSPMNAKARSVKLGLGVNQRTGRVQWCPGLTCC) the chain is on the cytoplasmic side. The helical; Signal-anchor for type II membrane protein transmembrane segment at 56–76 (KMLLLLPVVMLPLTLVLILIM) threads the bilayer. Topologically, residues 77–1040 (RLDGMLAALQ…MNPQKKCSVW (964 aa)) are extracellular. The Peptidase M13 domain occupies 251 to 1040 (EEGTREGIRM…MNPQKKCSVW (790 aa)). Disulfide bonds link Cys277–Cys1025, Cys285–Cys985, Cys452–Cys700, and Cys909–Cys1037. N-linked (GlcNAc...) asparagine glycosylation is found at Asn387, Asn593, Asn723, and Asn819. His872 contacts Zn(2+). The active site involves Glu873. Position 876 (His876) interacts with Zn(2+). An N-linked (GlcNAc...) asparagine glycan is attached at Asn916. Glu934 is a binding site for Zn(2+). Residue Asp938 is the Proton donor of the active site. N-linked (GlcNAc...) asparagine glycosylation is present at Asn969.

This sequence belongs to the peptidase M13 family. Interacts (via intracellular domain) with the putative carbohydrate kinase CG3534. Requires Zn(2+) as cofactor. Expressed in the gonads and testes of adults, and the adult and larval brain (at protein level). In embryos, expressed in the pericardial, muscle founder and glia cells (at protein level). In stage 12 embryos, expressed in specific dorsal muscle founder cells such as DA1 and DO2, and also in the certain pericardial progenitor cells where expression persists throughout embryogenesis. Expressed in the glia cells of the embryonic, larval and adult central nervous system. Expressed in the somatic muscles of larvae, pupae and adults. Isoform A: Detected in the male abdomen (at protein level). Isoform B: Not detected in the male or female abdomen (at protein level).

The protein resides in the cell membrane. It is found in the sarcoplasmic reticulum. Its subcellular location is the cytoplasm. The enzyme catalyses Preferential cleavage of polypeptides between hydrophobic residues, particularly with Phe or Tyr at P1'.. Metalloendoprotease which cleaves peptides at the amino side of hydrophobic residues - such as the hormones Akh and Dh31, and the neuropeptides Allatostatins (AST1, AST2, AST3 and AST4), Crz, Drosulfakinins (DSK-I and DSK-II), Lk, sNPF and the tachykinin peptides TK-1, TK-2, TK-4 and TK-5. Functions in female fertility, memory formation and may also act in regulating insulin signaling and food intake. Likely to be involved in controlling feeding behavior and the expression of insulin-like peptides by cleaving various regulatory peptides that include certain Drosulfakinins, Allatostatins and tachykinin peptides. Required in females for normal patterns of egg laying and hatching. Required in the dorsal paired medial neurons for the proper formation of long-term (LTM) and middle-term memories (MTM). Also required in the mushroom body neurons where it functions redundantly with neprilysins Nep2 and Nep3, in normal LTM formation. Its function is as follows. Cleaves angiotensin-1 and tachykinin neuropeptide substance P. Functions in maintaining muscle integrity, possibly independently of its endopeptidase activity. The chain is Neprilysin-4 from Drosophila melanogaster (Fruit fly).